The following is a 114-amino-acid chain: SNF1-related protein kinase regulatory subunit beta-3 (114 aa).

The interval 26-50 (SYNNVYSSTEDETRDPPAVPPHLQH) is disordered. The segment at 40–114 (DPPAVPPHLQ…PVQRRGSANV (75 aa)) is association with SNF1 complex (ASC).

The protein belongs to the 5'-AMP-activated protein kinase beta subunit family. In terms of assembly, subunit of a probable heterotrimeric complex consisting of an alpha catalytic (KIN10 or KIN11) subunit, and a beta (KINB) and a gamma (KING or SNF4) non-catalytic regulatory subunits. Interacts with KIN10, KIN11 and SNF4. Interacts with FLZ1, FLZ2, FLZ3, FLZ4, FLZ5, FLZ7, FLZ8, FLZ10, FLZ13, FLZ14, FLZ15 and FLZ16. In terms of tissue distribution, expressed in rosette (at the protein level). Expressed in the whole plant and at the different developmental stage with a higher level in stems.

Regulatory subunit of the probable trimeric SNF1-related protein kinase (SnRK) complex, which may play a role in a signal transduction cascade regulating gene expression and carbohydrate metabolism in higher plants. This chain is SNF1-related protein kinase regulatory subunit beta-3 (KINB3), found in Arabidopsis thaliana (Mouse-ear cress).